The chain runs to 616 residues: Proline--tRNA ligase (616 aa).

This sequence belongs to the class-II aminoacyl-tRNA synthetase family. ProS type 1 subfamily. In terms of assembly, homodimer.

The protein localises to the cytoplasm. The enzyme catalyses tRNA(Pro) + L-proline + ATP = L-prolyl-tRNA(Pro) + AMP + diphosphate. Its function is as follows. Catalyzes the attachment of proline to tRNA(Pro) in a two-step reaction: proline is first activated by ATP to form Pro-AMP and then transferred to the acceptor end of tRNA(Pro). As ProRS can inadvertently accommodate and process non-cognate amino acids such as alanine and cysteine, to avoid such errors it has two additional distinct editing activities against alanine. One activity is designated as 'pretransfer' editing and involves the tRNA(Pro)-independent hydrolysis of activated Ala-AMP. The other activity is designated 'posttransfer' editing and involves deacylation of mischarged Ala-tRNA(Pro). The misacylated Cys-tRNA(Pro) is not edited by ProRS. This is Proline--tRNA ligase from Lactococcus lactis subsp. cremoris (strain SK11).